Reading from the N-terminus, the 343-residue chain is N-acetyl-gamma-glutamyl-phosphate reductase (343 aa).

C149 is a catalytic residue.

Belongs to the NAGSA dehydrogenase family. Type 1 subfamily.

The protein localises to the cytoplasm. The enzyme catalyses N-acetyl-L-glutamate 5-semialdehyde + phosphate + NADP(+) = N-acetyl-L-glutamyl 5-phosphate + NADPH + H(+). It functions in the pathway amino-acid biosynthesis; L-arginine biosynthesis; N(2)-acetyl-L-ornithine from L-glutamate: step 3/4. Functionally, catalyzes the NADPH-dependent reduction of N-acetyl-5-glutamyl phosphate to yield N-acetyl-L-glutamate 5-semialdehyde. This Methanococcus maripaludis (strain C7 / ATCC BAA-1331) protein is N-acetyl-gamma-glutamyl-phosphate reductase.